The primary structure comprises 1342 residues: DNA-directed RNA polymerase subunit beta (1342 aa).

N6-acetyllysine occurs at positions 1022 and 1200.

Belongs to the RNA polymerase beta chain family. As to quaternary structure, the RNAP catalytic core consists of 2 alpha, 1 beta, 1 beta' and 1 omega subunit. When a sigma factor is associated with the core the holoenzyme is formed, which can initiate transcription.

It carries out the reaction RNA(n) + a ribonucleoside 5'-triphosphate = RNA(n+1) + diphosphate. In terms of biological role, DNA-dependent RNA polymerase catalyzes the transcription of DNA into RNA using the four ribonucleoside triphosphates as substrates. In Shigella dysenteriae serotype 1 (strain Sd197), this protein is DNA-directed RNA polymerase subunit beta.